A 181-amino-acid polypeptide reads, in one-letter code: Endoribonuclease YbeY (181 aa).

Zn(2+) contacts are provided by H120, H124, and H130. The tract at residues 157–181 is disordered; that stretch reads AGGKRPAGGADGADGAGEPGPTAAR. Residues 161–174 are compositionally biased toward gly residues; the sequence is RPAGGADGADGAGE.

This sequence belongs to the endoribonuclease YbeY family. Zn(2+) serves as cofactor.

The protein localises to the cytoplasm. Single strand-specific metallo-endoribonuclease involved in late-stage 70S ribosome quality control and in maturation of the 3' terminus of the 16S rRNA. This is Endoribonuclease YbeY from Frankia alni (strain DSM 45986 / CECT 9034 / ACN14a).